We begin with the raw amino-acid sequence, 363 residues long: Peptide chain release factor 1 (363 aa).

Gln-237 bears the N5-methylglutamine mark.

The protein belongs to the prokaryotic/mitochondrial release factor family. Post-translationally, methylated by PrmC. Methylation increases the termination efficiency of RF1.

It is found in the cytoplasm. Functionally, peptide chain release factor 1 directs the termination of translation in response to the peptide chain termination codons UAG and UAA. The sequence is that of Peptide chain release factor 1 from Mesoplasma florum (strain ATCC 33453 / NBRC 100688 / NCTC 11704 / L1) (Acholeplasma florum).